Consider the following 421-residue polypeptide: uncharacterized protein (421 aa).

This is an uncharacterized protein from Caenorhabditis elegans.